A 253-amino-acid polypeptide reads, in one-letter code: Adapter protein MecA (253 aa).

The protein belongs to the MecA family. Homodimer.

In terms of biological role, enables the recognition and targeting of unfolded and aggregated proteins to the ClpC protease or to other proteins involved in proteolysis. The sequence is that of Adapter protein MecA from Streptococcus pyogenes serotype M18 (strain MGAS8232).